We begin with the raw amino-acid sequence, 390 residues long: Transforming protein cbl (390 aa).

The tract at residues 1 to 52 is disordered; sequence ASAGGGCRRGPSFSPGSIPSLAAERAPDPPLAMAGNVKKSSGAGGGGSGGSG. Gly residues predominate over residues 42-52; that stretch reads GAGGGGSGGSG. The 4H stretch occupies residues 77–205; the sequence is PPCTVDKKMV…KGIFPSGLFQ (129 aa). The Cbl-PTB domain occupies 77–381; the sequence is PPCTVDKKMV…GRNQNPDLTG (305 aa). Residues 206–278 are EF-hand-like; that stretch reads GDTFRITKAD…FEFDIFTRLF (73 aa). Asp259, Thr261, Asn263, Tyr265, and Glu270 together coordinate Ca(2+). Residues 279–381 form an SH2-like region; that stretch reads QPWSSLLRNW…GRNQNPDLTG (103 aa). Arg324 provides a ligand contact to 4-O-phospho-L-tyrosine.

Induces early B-lineage lymphomas. The protein is Transforming protein cbl (V-CBL) of Mus musculus (Mouse).